The chain runs to 217 residues: Protein DJ-1alpha (217 aa).

The Nucleophile role is filled by Cys-133. The residue at position 133 (Cys-133) is a Cysteine sulfinic acid (-SO2H); alternate.

In terms of tissue distribution, expressed in testis (at protein level).

The protein localises to the cytoplasm. It localises to the nucleus. It is found in the mitochondrion. Plays an important role in cell protection against oxidative stress and cell death acting as oxidative stress sensor. Does not play a role in methylglyoxal detoxification. The protein is Protein DJ-1alpha of Drosophila melanogaster (Fruit fly).